The following is a 136-amino-acid chain: 2-hydroxyisobutanoyl-CoA mutase small subunit (136 aa).

One can recognise a B12-binding domain in the interval 5 to 133 (PIRVLLAKVG…DSIRSLVAAR (129 aa)). Position 18 (His-18) interacts with adenosylcob(III)alamin.

The protein belongs to the acyl-CoA mutase small subunit family. Homotetramer composed of two large substrate-binding subunits (HcmA) and two small cobalamin-binding subunits (HcmB). Adenosylcob(III)alamin serves as cofactor.

The catalysed reaction is 2-hydroxyisobutanoyl-CoA = (3S)-3-hydroxybutanoyl-CoA. In terms of biological role, together with HcmA, catalyzes the isomerization of 2-hydroxyisobutyryl-CoA and 3-hydroxybutyryl-CoA. Is specific for 2-hydroxyisobutyryl-CoA and (S)-3-hydroxybutyryl-CoA, and shows only very low activity with (R)-3-hydroxybutyryl-CoA, isobutyryl-CoA and butyryl-CoA. In vitro, can isomerize pivalyl-CoA and isovaleryl-CoA, with much lower efficiency. Plays a central role in the degradation of substrates bearing a tert-butyl moiety, such as the fuel oxygenate methyl tert-butyl ether (MTBE) and its metabolites. This chain is 2-hydroxyisobutanoyl-CoA mutase small subunit, found in Aquincola tertiaricarbonis.